The sequence spans 83 residues: Small ribosomal subunit protein bS16 (83 aa).

Belongs to the bacterial ribosomal protein bS16 family.

The polypeptide is Small ribosomal subunit protein bS16 (Verminephrobacter eiseniae (strain EF01-2)).